The primary structure comprises 904 residues: Phosphoenolpyruvate carboxylase (904 aa).

Residues histidine 151 and lysine 570 contribute to the active site.

This sequence belongs to the PEPCase type 1 family. Requires Mg(2+) as cofactor.

It carries out the reaction oxaloacetate + phosphate = phosphoenolpyruvate + hydrogencarbonate. In terms of biological role, forms oxaloacetate, a four-carbon dicarboxylic acid source for the tricarboxylic acid cycle. The polypeptide is Phosphoenolpyruvate carboxylase (Xanthomonas campestris pv. campestris (strain ATCC 33913 / DSM 3586 / NCPPB 528 / LMG 568 / P 25)).